Reading from the N-terminus, the 596-residue chain is Elongation factor 4 (596 aa).

A tr-type G domain is found at 2–184 (RNIRNFSIIA…AIVHRIPPPT (183 aa)). GTP is bound by residues 14–19 (DHGKST) and 131–134 (NKID).

The protein belongs to the TRAFAC class translation factor GTPase superfamily. Classic translation factor GTPase family. LepA subfamily.

The protein localises to the cell inner membrane. It catalyses the reaction GTP + H2O = GDP + phosphate + H(+). Functionally, required for accurate and efficient protein synthesis under certain stress conditions. May act as a fidelity factor of the translation reaction, by catalyzing a one-codon backward translocation of tRNAs on improperly translocated ribosomes. Back-translocation proceeds from a post-translocation (POST) complex to a pre-translocation (PRE) complex, thus giving elongation factor G a second chance to translocate the tRNAs correctly. Binds to ribosomes in a GTP-dependent manner. The protein is Elongation factor 4 of Xanthomonas oryzae pv. oryzae (strain PXO99A).